A 334-amino-acid polypeptide reads, in one-letter code: Biotin synthase (334 aa).

The 231-residue stretch at 55–285 (GEGGGVHACS…AHPSKIIKFA (231 aa)) folds into the Radical SAM core domain. [4Fe-4S] cluster contacts are provided by Cys-73, Cys-77, and Cys-80. The [2Fe-2S] cluster site is built by Cys-152, Cys-213, and Lys-283.

This sequence belongs to the radical SAM superfamily. Biotin synthase family. Homodimer. It depends on [4Fe-4S] cluster as a cofactor. The cofactor is [2Fe-2S] cluster.

The catalysed reaction is (4R,5S)-dethiobiotin + (sulfur carrier)-SH + 2 reduced [2Fe-2S]-[ferredoxin] + 2 S-adenosyl-L-methionine = (sulfur carrier)-H + biotin + 2 5'-deoxyadenosine + 2 L-methionine + 2 oxidized [2Fe-2S]-[ferredoxin]. It participates in cofactor biosynthesis; biotin biosynthesis; biotin from 7,8-diaminononanoate: step 2/2. In terms of biological role, catalyzes the conversion of dethiobiotin (DTB) to biotin by the insertion of a sulfur atom into dethiobiotin via a radical-based mechanism. This chain is Biotin synthase, found in Chlorobaculum parvum (strain DSM 263 / NCIMB 8327) (Chlorobium vibrioforme subsp. thiosulfatophilum).